Consider the following 210-residue polypeptide: Large ribosomal subunit protein uL4 (210 aa).

Residues 44 to 77 are disordered; sequence ARQGNASSKTRSEVRGGGRKPWRQKGTGRARAGS. Basic residues predominate over residues 60–71; sequence GGRKPWRQKGTG.

The protein belongs to the universal ribosomal protein uL4 family. As to quaternary structure, part of the 50S ribosomal subunit.

Its function is as follows. One of the primary rRNA binding proteins, this protein initially binds near the 5'-end of the 23S rRNA. It is important during the early stages of 50S assembly. It makes multiple contacts with different domains of the 23S rRNA in the assembled 50S subunit and ribosome. Functionally, forms part of the polypeptide exit tunnel. The polypeptide is Large ribosomal subunit protein uL4 (Microcystis aeruginosa (strain NIES-843 / IAM M-2473)).